Consider the following 353-residue polypeptide: Dihydroorotate dehydrogenase (quinone) (353 aa).

Residues 67–71 (AGFDK) and Thr-91 each bind FMN. Residue Lys-71 coordinates substrate. A substrate-binding site is contributed by 116–120 (NRMGF). FMN contacts are provided by Asn-144 and Asn-177. Residue Asn-177 coordinates substrate. The active-site Nucleophile is Ser-180. Residue Asn-182 coordinates substrate. Positions 213 and 241 each coordinate FMN. A substrate-binding site is contributed by 242-243 (NT). Residues Gly-265, Gly-294, and 315-316 (YT) each bind FMN.

The protein belongs to the dihydroorotate dehydrogenase family. Type 2 subfamily. Monomer. It depends on FMN as a cofactor.

Its subcellular location is the cell membrane. It carries out the reaction (S)-dihydroorotate + a quinone = orotate + a quinol. It participates in pyrimidine metabolism; UMP biosynthesis via de novo pathway; orotate from (S)-dihydroorotate (quinone route): step 1/1. Functionally, catalyzes the conversion of dihydroorotate to orotate with quinone as electron acceptor. The chain is Dihydroorotate dehydrogenase (quinone) from Mycobacteroides abscessus (strain ATCC 19977 / DSM 44196 / CCUG 20993 / CIP 104536 / JCM 13569 / NCTC 13031 / TMC 1543 / L948) (Mycobacterium abscessus).